We begin with the raw amino-acid sequence, 208 residues long: Uracil phosphoribosyltransferase (208 aa).

Residues Arg-78, Arg-103, and 130-138 (DPMLATGGT) each bind 5-phospho-alpha-D-ribose 1-diphosphate. Residues Ile-193 and 198–200 (GDA) contribute to the uracil site. Asp-199 lines the 5-phospho-alpha-D-ribose 1-diphosphate pocket.

The protein belongs to the UPRTase family. Requires Mg(2+) as cofactor.

The catalysed reaction is UMP + diphosphate = 5-phospho-alpha-D-ribose 1-diphosphate + uracil. Its pathway is pyrimidine metabolism; UMP biosynthesis via salvage pathway; UMP from uracil: step 1/1. With respect to regulation, allosterically activated by GTP. Catalyzes the conversion of uracil and 5-phospho-alpha-D-ribose 1-diphosphate (PRPP) to UMP and diphosphate. The polypeptide is Uracil phosphoribosyltransferase (Blochmanniella floridana).